The sequence spans 616 residues: Vitamin B12 transporter BtuB (616 aa).

Positions M1 to A20 are cleaved as a signal peptide. The TonB box signature appears at D26–N33. Residues P38–T152 form the TBDR plug domain. Cyanocob(III)alamin is bound by residues L83, S85, N92, and V110 to T111. A TBDR beta-barrel domain is found at K155–F616. 3 consecutive transmembrane segments (beta stranded) span residues T158–G165, Y169–Q178, and T184–T195. 4 residues coordinate Ca(2+): D199, Q211, D213, and D215. 2 consecutive transmembrane segments (beta stranded) span residues F217–E227 and D232–A248. Residues Y249, D250, and D263 each coordinate Ca(2+). 17 consecutive transmembrane segments (beta stranded) span residues R265–N279, D281–N298, T311–D327, H330–W339, Y355–G371, V373–D383, F387–I402, Y405–N419, E436–E445, V451–N460, Y475–F492, P496–A511, R519–T531, D537–D552, N560–S574, I587–A598, and A604–F616. Position 311 (T311) interacts with cyanocob(III)alamin. R519 serves as a coordination point for cyanocob(III)alamin. A TonB C-terminal box motif is present at residues Y599–F616.

It belongs to the TonB-dependent receptor family. BtuB (TC 1.B.14.3.1) subfamily.

It is found in the cell outer membrane. Its function is as follows. Involved in the active translocation of vitamin B12 (cyanocobalamin) across the outer membrane to the periplasmic space. It derives its energy for transport by interacting with the trans-periplasmic membrane protein TonB. In Cronobacter sakazakii (strain ATCC BAA-894) (Enterobacter sakazakii), this protein is Vitamin B12 transporter BtuB.